We begin with the raw amino-acid sequence, 436 residues long: Adenylosuccinate synthetase (436 aa).

Residues 12–18 (GDEGKGK) and 40–42 (GHT) each bind GTP. Asp13 functions as the Proton acceptor in the catalytic mechanism. Mg(2+)-binding residues include Asp13 and Gly40. IMP-binding positions include 13–16 (DEGK), 38–41 (NAGH), Thr128, Arg142, Gln223, Thr238, and Arg302. His41 serves as the catalytic Proton donor. Substrate is bound at residue 298–304 (TTTGRRR). GTP-binding positions include Arg304, 330 to 332 (KLD), and 412 to 414 (SLG).

It belongs to the adenylosuccinate synthetase family. Homodimer. Mg(2+) is required as a cofactor.

It localises to the cytoplasm. The enzyme catalyses IMP + L-aspartate + GTP = N(6)-(1,2-dicarboxyethyl)-AMP + GDP + phosphate + 2 H(+). It functions in the pathway purine metabolism; AMP biosynthesis via de novo pathway; AMP from IMP: step 1/2. Functionally, plays an important role in the de novo pathway of purine nucleotide biosynthesis. Catalyzes the first committed step in the biosynthesis of AMP from IMP. This is Adenylosuccinate synthetase from Prochlorococcus marinus (strain MIT 9312).